A 271-amino-acid polypeptide reads, in one-letter code: Ribosomal RNA small subunit methyltransferase A (271 aa).

Residues histidine 18, leucine 20, glycine 45, glutamate 66, aspartate 91, and asparagine 113 each coordinate S-adenosyl-L-methionine.

Belongs to the class I-like SAM-binding methyltransferase superfamily. rRNA adenine N(6)-methyltransferase family. RsmA subfamily.

The protein resides in the cytoplasm. It catalyses the reaction adenosine(1518)/adenosine(1519) in 16S rRNA + 4 S-adenosyl-L-methionine = N(6)-dimethyladenosine(1518)/N(6)-dimethyladenosine(1519) in 16S rRNA + 4 S-adenosyl-L-homocysteine + 4 H(+). Its function is as follows. Specifically dimethylates two adjacent adenosines (A1518 and A1519) in the loop of a conserved hairpin near the 3'-end of 16S rRNA in the 30S particle. May play a critical role in biogenesis of 30S subunits. This Baumannia cicadellinicola subsp. Homalodisca coagulata protein is Ribosomal RNA small subunit methyltransferase A.